We begin with the raw amino-acid sequence, 953 residues long: Translation initiation factor IF-2 (953 aa).

Disordered regions lie at residues 52–247 (KASK…LAEL) and 279–363 (TKLK…TERK). Composition is skewed to basic and acidic residues over residues 80–89 (TGSEHVEKTQ), 98–111 (FKAE…EQAA), and 140–188 (QGDK…ENHK). Positions 191–207 (RFTNQKKQGRQEPQSKS) are enriched in polar residues. Basic and acidic residues predominate over residues 229–247 (RQSETRFRAQQEAKRLAEL). Residues 282–291 (KSSNISAKST) are compositionally biased toward polar residues. A compositionally biased stretch (basic and acidic residues) spans 300–317 (ARPEKNRELTHHSQEGQK). The segment covering 322–338 (SWNSQNQVRNQKNSNWN) has biased composition (low complexity). Residues 339-348 (KNKKTKKGKN) show a composition bias toward basic residues. In terms of domain architecture, tr-type G spans 454-623 (ERAPVVTIMG…LLVAEVEELK (170 aa)). Residues 463 to 470 (GHVDHGKT) form a G1 region. 463 to 470 (GHVDHGKT) contacts GTP. The G2 stretch occupies residues 488-492 (GITQH). The segment at 509–512 (DTPG) is G3. GTP-binding positions include 509–513 (DTPGH) and 563–566 (NKID). The segment at 563–566 (NKID) is G4. The tract at residues 599 to 601 (SAK) is G5.

The protein belongs to the TRAFAC class translation factor GTPase superfamily. Classic translation factor GTPase family. IF-2 subfamily.

The protein resides in the cytoplasm. Its function is as follows. One of the essential components for the initiation of protein synthesis. Protects formylmethionyl-tRNA from spontaneous hydrolysis and promotes its binding to the 30S ribosomal subunits. Also involved in the hydrolysis of GTP during the formation of the 70S ribosomal complex. The protein is Translation initiation factor IF-2 of Streptococcus pyogenes serotype M5 (strain Manfredo).